The following is a 90-amino-acid chain: DNA-directed RNA polymerase subunit omega (90 aa).

The tract at residues 69–90 (RQEQQEQEAAELAAVSSIARNR) is disordered.

Belongs to the RNA polymerase subunit omega family. The RNAP catalytic core consists of 2 alpha, 1 beta, 1 beta' and 1 omega subunit. When a sigma factor is associated with the core the holoenzyme is formed, which can initiate transcription.

It catalyses the reaction RNA(n) + a ribonucleoside 5'-triphosphate = RNA(n+1) + diphosphate. Its function is as follows. Promotes RNA polymerase assembly. Latches the N- and C-terminal regions of the beta' subunit thereby facilitating its interaction with the beta and alpha subunits. In Vibrio vulnificus (strain CMCP6), this protein is DNA-directed RNA polymerase subunit omega.